The following is a 979-amino-acid chain: UPF0182 protein Mb0065 (979 aa).

7 consecutive transmembrane segments (helical) span residues 19–41 (LVTAGMGMLALLLFGPRLVDIYV), 63–85 (LAIVAAVALVVAGIVLAALLLAY), 114–136 (LFGWGIAVTLGVVCGLIASFDWV), 174–196 (WLFVAVVLAFLASLLTHYLFGGL), 208–230 (AARVQLAVFAGAVVLLKAVAYWL), 261–280 (LVLVAIAVLCAVSFFTAIFL), and 285–307 (IPAMAAALLVLSAILVGGLWPLL). A disordered region spans residues 898 to 948 (GTGRVATAPGGDAASAPPPGAGGPAPPQAVPPPRTTQPPAAPPRGPDVPPA). Residues 902-912 (VATAPGGDAAS) are compositionally biased toward low complexity. Residues 913 to 946 (APPPGAGGPAPPQAVPPPRTTQPPAAPPRGPDVP) are compositionally biased toward pro residues.

The protein belongs to the UPF0182 family.

It is found in the cell membrane. This chain is UPF0182 protein Mb0065, found in Mycobacterium bovis (strain ATCC BAA-935 / AF2122/97).